Consider the following 230-residue polypeptide: Uracil-DNA glycosylase (230 aa).

D70 serves as the catalytic Proton acceptor.

It belongs to the uracil-DNA glycosylase (UDG) superfamily. UNG family.

The protein localises to the cytoplasm. The catalysed reaction is Hydrolyzes single-stranded DNA or mismatched double-stranded DNA and polynucleotides, releasing free uracil.. Functionally, excises uracil residues from the DNA which can arise as a result of misincorporation of dUMP residues by DNA polymerase or due to deamination of cytosine. This Campylobacter concisus (strain 13826) protein is Uracil-DNA glycosylase.